Reading from the N-terminus, the 666-residue chain is uncharacterized protein (666 aa).

Belongs to the MG032/MG096/MG288 family.

This is an uncharacterized protein from Mycoplasma pneumoniae (strain ATCC 29342 / M129 / Subtype 1) (Mycoplasmoides pneumoniae).